Consider the following 411-residue polypeptide: Mannan endo-1,4-beta-mannosidase 1 (411 aa).

The N-terminal stretch at 1-17 is a signal peptide; that stretch reads MLNILPFFLFFLPFLIG. Asn33 carries an N-linked (GlcNAc...) asparagine glycan. Substrate contacts are provided by Trp87 and Asn197. Glu198 acts as the Proton donor in catalysis. The N-linked (GlcNAc...) asparagine glycan is linked to Asn202. Position 277 (Tyr277) interacts with substrate. The active-site Nucleophile is Glu319. Trp361 is a binding site for substrate. Residues Asn366 and Asn384 are each glycosylated (N-linked (GlcNAc...) asparagine).

This sequence belongs to the glycosyl hydrolase 5 (cellulase A) family. In terms of tissue distribution, expressed in roots, stems and flowers.

It localises to the secreted. It catalyses the reaction Random hydrolysis of (1-&gt;4)-beta-D-mannosidic linkages in mannans, galactomannans and glucomannans.. This Arabidopsis thaliana (Mouse-ear cress) protein is Mannan endo-1,4-beta-mannosidase 1 (MAN1).